The primary structure comprises 419 residues: MNKFWIMLSHTYKNKIMAKSFIISTVITVLLVLVVTNLESIISLFQGDDAKEKIAVVDETNELYPVFSKQLKAVDTDGDLDVKLSKQSEDEVTKQVKDESLDGMLIIKRDEKGTISGTYKALTISDESTYQTLQQALTQTKTAVGTAELGVSQETISSLYAPVTVGQKALKEGAKSEEELGQTVGLVYIMLFVIYFSVIMYASMIAMEVATEKSSRVMEILISSMPPIQQMFAKLLGIGLVGITQLAIIIGAGSLSLKLNQKSETASSVGGFLNLTDVSATTVIYAVIFFLLGYFLYATLAAFLGSVVSRIEDVQQTITPMTLLVVAGFMIAMFGLNAPDAGFITVTSFIPFFTPMIMFLRVGMLDIPFWQAAVGIGITLLTIVILAVIGARIYKGGVLIYGNSSAFKAIKQALRLAKN.

The next 7 helical transmembrane spans lie at 16–36 (IMAK…LVVT), 186–206 (LVYI…SMIA), 235–255 (LLGI…AGSL), 283–303 (VIYA…LAAF), 318–338 (ITPM…GLNA), 340–360 (DAGF…IMFL), and 369–389 (FWQA…LAVI).

The protein to M.jannaschii MJ1024.

The protein resides in the cell membrane. This is an uncharacterized protein from Bacillus subtilis (strain 168).